Consider the following 2083-residue polypeptide: MSLAPEWQHPFVNIFKLCDVDTMREFETKGDVTEHIDKIIGKKVFKIRGMIPAGNYLRVPRTKLQTLGLTGRLLYIQLKVTPIKVFAIHIEVVTEDHNIHRISISNMYNPESMKRKSNGVQLPFPKPSHRWCVLAVDLREALRGYTSSPFASVKAVQTCSWMTVRTMFASDYKFSLQSLPGDMALSHALDSSLFEMVWLPAEPQDAPTMDFMPPPKRYGTRARRPGTAETADTAGAAGRKSLSGASAGGAGPAKGGAKAGAAAGGKRAVSSAGATRGTPSQRGSTAGAATPGSGAGGGGHDGEEDFEDDLSEDLDNGAPLPPSPAVPPPLSPSVAARIAGRATSANIGAATAAGAIVGAAAAHPRPGESDASARPFPRPTTALLAGAATTASLRPPIASANVAKPEPGQPAAQPLLPDPALTLTRVNAYSGEFVRCLAWLPGTDEVVFAAASVVVIMGVADPGAAAQQQAAVTPGRQRYCLGHTAFVCALAVASDGRLLASCQEGKEAIVRLWDTANCACLAILNAHASGLSCVDLSPDLRALAAVGLDVQGRQTIALWNIAELRAAGGPKVELVTRHATEYNIKVLKFSAYQEDHLLTAGRDSIRIYRLKAGQLRGTSVRLVPQDKRVTSFAGGVSAAVGPNIFTDIGFEAGVGVYGVDAFKVYVSSASGALFVVDYTTRQLDAIFQLHAAAINCLVVSDGLVLTGGDDRLLRAWPLDFRDYLLEAEHEGAVTGLAMSTDALRLAVGTENGTLGVLAIPTHAYTTLLRSHCGAVNAVAVDPNRDQYCTVSSDGTLRIWHLATHQQLYEFDAPGEAVSAIAYHPHPSHHELAAGFANGRLRVFDVPSTTLLQEHHQHRAGITELLFSPGGDRLFSGGADGALVVYDTARMYAPAQYLSAGVRDIKVCCAVSSNGAFFASLVRDPYRRTTSLLVFHGRTLDPFMRIETDAAAYVKLAFSADCNELWALTSGRRLDRYELKDGQLVQQIHEVSPLELTALCLDPAGRYAATAGADGLLRLWGCVPLPALRGLKGLPPNSAFLGHPSAILGAAFHRSGYLVTVGDADCVCVWRVNADHMQQERGHLAAAAHALRGAAAGGGAAGASPLLLQGAAHHTQATGALDPTDPRSRAHPSTALGPVASARDHQLTTRAAALGTPLPAGVLGLVPAPSAFTGTYTQGMAAPSLGSTVASPTRVTAATANSMAALSLVANSPAVAATAPGLPSHALVVPKPSPPPPSAAPASPGRSPNRALAGAGPARSRLPVPLPPSPQPLPPPPPPRCSWLLGYSPTGSSNVAWNATTGLFCYVVEDMVVMEKLATRQQRYLRGHNRPLSCLAASPDGALVAAGPAAAEPAFTEPAAGARAAQLQQQGVAVGPGGASPTAPFADVVVWEAASGRELWRLRYHPLGVQALAFSPDGRWLVSLGRDPERGVVVWDVAAGLLVAAGRTEQSPRAAAWLWGGHNPAFATAGADGLLLWTLQDNFLEQRTVPLSPTASPRDPRPVTALAVDPHGALLAAEAPAAPGSQVPVWQVQVELQPPQEPGGEAAVAPGGGGGMSAAVVQVAALPSGCVVTAMAAGLDFALLATDGGSVVRYRRSTLSGTWLESSAVRLDGRVAALSAEPNMCDAVAATDTATIWFVGMQDASCVPIVCGQAAPVTGLVPAPHSGRVMASTAADGLLRVWRLGPEDAEPALELHSTSPATAAAFLLRQPTDAPAHTLRHPPSAAPSSAASSSPLDPLDPLPAADAAPARPVLLPAPHLLGGYGDGSLRLFALEPAVQLSWALARHPAPVVGVAPHPRRGLVLSASSDGSLAVTDLSSTRLVSYITAFTAAGPTPHSPGGTGRRSPRGAASPPPAPPRPGTGPLQAMAVSSGPGAPLAALAWRDRLVVFAAPWDDPACSPLAEYDVTPSDGRTDAADSHGLLSPDVPACLAFVNSSSGSSSSGTSAASPGLSAHLGGSSSGAPSSKLLAYASPLLPGTVLLYDVRLAAVARRVRLPQMVRSLAVAPDGGAMVVGCMGRSVFLVHLASGNTEELGGHAGAVAAASYTGDGGHAVTASGSVLMVWDAAQLLKGVTPPPPRMLREF.

The tract at residues 205–333 is disordered; sequence DAPTMDFMPP…PAVPPPLSPS (129 aa). Positions 227–245 are enriched in low complexity; sequence TAETADTAGAAGRKSLSGA. A compositionally biased stretch (gly residues) spans 246 to 258; sequence SAGGAGPAKGGAK. Composition is skewed to low complexity over residues 259–274 and 283–292; these read AGAAAGGKRAVSSAGA and GSTAGAATPG. Residues 302–315 show a composition bias toward acidic residues; that stretch reads GEEDFEDDLSEDLD. The segment covering 319 to 331 has biased composition (pro residues); sequence PLPPSPAVPPPLS. WD repeat units follow at residues 482 to 523, 526 to 569, 579 to 620, 689 to 726, 728 to 767, 770 to 809, 812 to 853, 856 to 895, 990 to 1029, and 1041 to 1079; these read GHTA…CLAI, AHAS…AAGG, ATEY…GTSV, LHAAAINCLVVSDGLVLTGGDDRLLRAWPLDFRDYLLE, EHEGAVTGLAMSTDALRLAVGTENGTLGVLAIPTHAYTTL, SHCGAVNAVAVDPNRDQYCTVSSDGTLRIWHLATHQQLYE, APGE…LLQE, QHRAGITELLFSPGGDRLFSGGADGALVVYDTARMYAPAQ, VSPLELTALCLDPAGRYAATAGADGLLRLWGCVPLPALRG, and GHPSAILGAAFHRSGYLVTVGDADCVCVWRVNADHMQQE. 2 disordered regions span residues 1113–1141 and 1225–1276; these read HTQATGALDPTDPRSRAHPSTALGPVASA and ALVV…PPPP. Residues 1263–1276 show a composition bias toward pro residues; sequence VPLPPSPQPLPPPP. WD repeat units lie at residues 1326 to 1365, 1403 to 1444, 1448 to 1486, 1497 to 1539, 1651 to 1691, 1736 to 1781, and 1785 to 1824; these read GHNRPLSCLAASPDGALVAAGPAAAEPAFTEPAAGARAAQ, YHPL…LVAA, EQSPRAAAWLWGGHNPAFATAGADGLLLWTLQDNFLEQR, RDPR…QPPQ, GQAA…AEPA, DPLD…QLSW, and RHPAPVVGVAPHPRRGLVLSASSDGSLAVTDLSSTRLVSY. A disordered region spans residues 1713–1743; sequence APAHTLRHPPSAAPSSAASSSPLDPLDPLPA. Low complexity predominate over residues 1720-1743; the sequence is HPPSAAPSSAASSSPLDPLDPLPA. The disordered stretch occupies residues 1832-1870; sequence GPTPHSPGGTGRRSPRGAASPPPAPPRPGTGPLQAMAVS. The segment covering 1851-1860 has biased composition (pro residues); that stretch reads SPPPAPPRPG. The stretch at 2035–2073 is one WD 18 repeat; that stretch reads GHAGAVAAASYTGDGGHAVTASGSVLMVWDAAQLLKGVT.

This sequence belongs to the WD repeat WDR90/POC16 family.

The protein resides in the cytoplasm. The protein localises to the cytoskeleton. It is found in the microtubule organizing center. Its subcellular location is the centrosome. It localises to the centriole. Functionally, required for flagellum assembly and/or maintenance. The protein is Centriole proteome protein 16 of Chlamydomonas reinhardtii (Chlamydomonas smithii).